The primary structure comprises 658 residues: UvrABC system protein B (658 aa).

The region spanning lysine 25–methionine 178 is the Helicase ATP-binding domain. An ATP-binding site is contributed by glycine 38–threonine 45. Residues histidine 91–isoleucine 114 carry the Beta-hairpin motif. In terms of domain architecture, Helicase C-terminal spans glutamine 433–lysine 607. The UVR domain maps to glutamate 623 to leucine 658.

Belongs to the UvrB family. As to quaternary structure, forms a heterotetramer with UvrA during the search for lesions. Interacts with UvrC in an incision complex.

Its subcellular location is the cytoplasm. The UvrABC repair system catalyzes the recognition and processing of DNA lesions. A damage recognition complex composed of 2 UvrA and 2 UvrB subunits scans DNA for abnormalities. Upon binding of the UvrA(2)B(2) complex to a putative damaged site, the DNA wraps around one UvrB monomer. DNA wrap is dependent on ATP binding by UvrB and probably causes local melting of the DNA helix, facilitating insertion of UvrB beta-hairpin between the DNA strands. Then UvrB probes one DNA strand for the presence of a lesion. If a lesion is found the UvrA subunits dissociate and the UvrB-DNA preincision complex is formed. This complex is subsequently bound by UvrC and the second UvrB is released. If no lesion is found, the DNA wraps around the other UvrB subunit that will check the other stand for damage. This Helicobacter acinonychis (strain Sheeba) protein is UvrABC system protein B.